The chain runs to 434 residues: Guanosine-inosine kinase (434 aa).

GMP is bound by residues 40-45, 93-97, and R198; these read DQTLVD and GTIGN. ATP contacts are provided by residues 284–289, G357, and N402; that span reads TAGPIG.

Belongs to the carbohydrate kinase PfkB family. Requires Mg(2+) as cofactor.

It catalyses the reaction guanosine + ATP = GMP + ADP + H(+). It carries out the reaction inosine + ATP = IMP + ADP + H(+). It functions in the pathway purine metabolism; IMP biosynthesis via salvage pathway; IMP from inosine: step 1/1. The protein operates within purine metabolism; GMP biosynthesis via salvage pathway. Catalyzes the phosphorylation of guanosine and inosine to GMP and IMP, respectively. The sequence is that of Guanosine-inosine kinase from Escherichia coli O157:H7.